Reading from the N-terminus, the 385-residue chain is Trans-enoyl reductase poxH (385 aa).

Residue 64–67 coordinates NADP(+); sequence QPYS. Residue 156-163 participates in substrate binding; that stretch reads PDPAAPPI. NADP(+)-binding positions include 199-202, 223-226, Y241, and 289-290; these read STSV, SGTD, and LG. 309 to 313 provides a ligand contact to substrate; it reads HMAPL. Residue 372 to 373 coordinates NADP(+); sequence KR.

The protein belongs to the zinc-containing alcohol dehydrogenase family. As to quaternary structure, monomer.

The protein operates within secondary metabolite biosynthesis. Functionally, trans-enoyl reductase; part of the gene cluster that mediates the biosynthesis of oxaleimides, cytotoxic compounds containing an unusual disubstituted succinimide moiety. The first step of the pathway is provided by the HR-PKS poxF that serves in a new mode of collaborative biosynthesis with the PKS-NRPS poxE, by providing the olefin containing amino acid substrate via the synthesis of an ACP-bound dec-4-enoate. The cytochrome P450 monooxygenase poxM-catalyzed oxidation at the alpha-position creates the enzyme-bound 2-hydroxydec-4-enoyl-ACP thioester, which may be prone to spontaneous hydrolysis to yield 2-hydroxydec-4-enoic acid due to increased electrophilicity of the carbonyl. 2-hydroxydec-4-enoic acid can then be further oxidized by poxM to yield the alpha-ketoacid 2-oxodec-4-enoicacid, which is reductively aminated by the aminotransferase poxL to yield (S,E)-2-aminodec-4-enoic acid. The Hybrid PKS-NRPS synthetase poxE then performs condensation between the octaketide product of its PKS modules and the amino group of (S,E)-2-aminodec-4-enoic acid which is activated and incorporated by the adenylation domain. The resulting aminoacyl product can be cyclized by the Diels-Alderase PoxQ and reductively released by the reductive (R) domain of poxE to yield an aldehyde intermediate. The released aldehyde is then substrate for a Knoevenagel condensation by the hydrolyase poxO followed by an oxidation at the 5-position of the pyrrolidone ring. The presence of the olefin from the amino acid building block allows for migration of the substituted allyl group to occur. This allylic transposition reaction takes place in a conjugate addition, semipinacol-like fashion to yield a succinimide intermediate. Iterative two-electron oxidations of the C7 methyl of the succinimide intermediate to the carboxylic acid can be catalyzed by one of two remaining cytochrome P450 monooxygenasess poxC or poxD to yield oxaleimide A. Subsequent oxidation yields the maleimide scaffold oxaleimide I. Both oxaleimide A and oxaleimide I can undergo oxidative modifications in the decalin ring to yield the series of products oxaleimides B to H. The polypeptide is Trans-enoyl reductase poxH (Penicillium oxalicum).